The chain runs to 531 residues: Peroxinectin A (531 aa).

Residues 1–21 form the signal peptide; that stretch reads MRLNLISFFIIFTILVSISNS. The N-linked (GlcNAc...) asparagine glycan is linked to Asn62. His101 functions as the Proton acceptor in the catalytic mechanism. N-linked (GlcNAc...) asparagine glycans are attached at residues Asn131 and Asn338.

This sequence belongs to the peroxidase family.

It is found in the secreted. The catalysed reaction is 2 a phenolic donor + H2O2 = 2 a phenolic radical donor + 2 H2O. The polypeptide is Peroxinectin A (poxA) (Dictyostelium discoideum (Social amoeba)).